A 765-amino-acid chain; its full sequence is Transcription factor RFX3 (765 aa).

A DNA-binding region (RFX-type winged-helix) is located at residues 189 to 264 (HLQWLLDNYE…YHYYGIRVKP (76 aa)).

This sequence belongs to the RFX family.

The protein localises to the nucleus. Functionally, transcription factor required for ciliogenesis and islet cell differentiation during endocrine pancreas development. The protein is Transcription factor RFX3 (rfx3) of Danio rerio (Zebrafish).